Here is a 137-residue protein sequence, read N- to C-terminus: Basic phospholipase A2 homolog MT1 (137 aa).

A signal peptide spans 1–16 (MRTLWIVALLLVGVEG). Intrachain disulfides connect C42-C131, C44-C60, C59-C111, C65-C137, C66-C104, C73-C97, and C91-C102. The tract at residues 121 to 133 (KKYKAYFKFKCKK) is important for membrane-damaging activities in eukaryotes and bacteria; heparin-binding.

The protein belongs to the phospholipase A2 family. Group II subfamily. K49 sub-subfamily. As to quaternary structure, binds to heparin. Expressed by the venom gland.

Its subcellular location is the secreted. Its activity is regulated as follows. Heparin and wedelolactone inhibit the myotoxic activity. The PLA2 inhibitor, para-bromophenacyl bromide (BPB), inhibits the myotoxic activity. Snake venom phospholipase A2 homolog that lacks enzymatic activity. Has myotoxic activities. A model of myotoxic mechanism has been proposed: an apo Lys49-PLA2 is activated by the entrance of a hydrophobic molecule (e.g. fatty acid) at the hydrophobic channel of the protein leading to a reorientation of a monomer. This reorientation causes a transition between 'inactive' to 'active' states, causing alignment of C-terminal and membrane-docking sites (MDoS) side-by-side and putting the membrane-disruption sites (MDiS) in the same plane, exposed to solvent and in a symmetric position for both monomers. The MDoS region stabilizes the toxin on membrane by the interaction of charged residues with phospholipid head groups. Subsequently, the MDiS region destabilizes the membrane with penetration of hydrophobic residues. This insertion causes a disorganization of the membrane, allowing an uncontrolled influx of ions (i.e. calcium and sodium), and eventually triggering irreversible intracellular alterations and cell death. The protein is Basic phospholipase A2 homolog MT1 of Agkistrodon contortrix laticinctus (Broad-banded copperhead).